A 304-amino-acid polypeptide reads, in one-letter code: Protease HtpX homolog 1 (304 aa).

The next 2 membrane-spanning stretches (helical) occupy residues 17 to 37 (VTLF…IALL) and 39 to 59 (SWVL…WFSD). His140 is a Zn(2+) binding site. The active site involves Glu141. Zn(2+) is bound at residue His144. Helical transmembrane passes span 151–171 (AVIT…RFAF) and 186–206 (AVLA…FLLI). A Zn(2+)-binding site is contributed by Glu214.

It belongs to the peptidase M48B family. Zn(2+) is required as a cofactor.

The protein resides in the cell membrane. The chain is Protease HtpX homolog 1 from Streptomyces coelicolor (strain ATCC BAA-471 / A3(2) / M145).